The chain runs to 107 residues: Phosphoribosyl-ATP pyrophosphatase (107 aa).

This sequence belongs to the PRA-PH family.

Its subcellular location is the cytoplasm. The catalysed reaction is 1-(5-phospho-beta-D-ribosyl)-ATP + H2O = 1-(5-phospho-beta-D-ribosyl)-5'-AMP + diphosphate + H(+). It functions in the pathway amino-acid biosynthesis; L-histidine biosynthesis; L-histidine from 5-phospho-alpha-D-ribose 1-diphosphate: step 2/9. The polypeptide is Phosphoribosyl-ATP pyrophosphatase (Azoarcus sp. (strain BH72)).